Consider the following 120-residue polypeptide: uncharacterized protein (120 aa).

A helical transmembrane segment spans residues 8–28 (LIVKWFVGLMLIMMMVAVSLF).

The protein localises to the membrane. This is an uncharacterized protein from Bacillus anthracis.